A 330-amino-acid chain; its full sequence is Aspartate--ammonia ligase (330 aa).

Belongs to the class-II aminoacyl-tRNA synthetase family. AsnA subfamily.

Its subcellular location is the cytoplasm. It carries out the reaction L-aspartate + NH4(+) + ATP = L-asparagine + AMP + diphosphate + H(+). The protein operates within amino-acid biosynthesis; L-asparagine biosynthesis; L-asparagine from L-aspartate (ammonia route): step 1/1. This chain is Aspartate--ammonia ligase, found in Streptococcus thermophilus (strain CNRZ 1066).